A 450-amino-acid chain; its full sequence is UDP-N-acetylmuramoylalanine--D-glutamate ligase (450 aa).

119–125 (GSNGKTT) provides a ligand contact to ATP.

This sequence belongs to the MurCDEF family.

The protein localises to the cytoplasm. The catalysed reaction is UDP-N-acetyl-alpha-D-muramoyl-L-alanine + D-glutamate + ATP = UDP-N-acetyl-alpha-D-muramoyl-L-alanyl-D-glutamate + ADP + phosphate + H(+). It functions in the pathway cell wall biogenesis; peptidoglycan biosynthesis. Cell wall formation. Catalyzes the addition of glutamate to the nucleotide precursor UDP-N-acetylmuramoyl-L-alanine (UMA). In Bacillus thuringiensis (strain Al Hakam), this protein is UDP-N-acetylmuramoylalanine--D-glutamate ligase.